Consider the following 443-residue polypeptide: Endothelin receptor type B (443 aa).

Residues 1–26 (MQPLRSLCGRALVALIFACGVAGVQS) form the signal peptide. Residues 27-102 (EERGFPPAGA…GPIEIKDTFK (76 aa)) lie on the Extracellular side of the membrane. The tract at residues 53–89 (TFWPRGSNASLPRSSSPPQMPKGGRMAGPPARTLTPP) is disordered. The segment covering 59 to 69 (SNASLPRSSSP) has biased composition (polar residues). N-linked (GlcNAc...) asparagine glycosylation occurs at Asn60. The chain crosses the membrane as a helical span at residues 103–127 (YINTVVSCLVFVLGIIGNSTLLRII). Residues 128–138 (YKNKCMRNGPN) are Cytoplasmic-facing. The chain crosses the membrane as a helical span at residues 139-164 (ILIASLALGDLLHIIIDIPINVYKLL). At 165–176 (AEDWPFGVEMCK) the chain is on the extracellular side. Cys175 and Cys256 are disulfide-bonded. The helical transmembrane segment at 177 to 198 (LVPFIQKASVGITVLSLCALSI) threads the bilayer. The Cytoplasmic portion of the chain corresponds to 199–219 (DRYRAVASWSRIKGIGVPKWT). The chain crosses the membrane as a helical span at residues 220–244 (AVEIVLIWVVSVVLAVPEALGFDMI). Residues 245 to 272 (TTDYKGNRLRICLLHPTQKTAFMQFYKT) are Extracellular-facing. Residues 273 to 297 (AKDWWLFSFYFCLPLAITAFFYTLM) traverse the membrane as a helical segment. Residues 298–325 (TCEMLRKKSGMQIALNDHLKQRREVAKT) are Cytoplasmic-facing. A Phosphoserine modification is found at Ser306. A helical transmembrane segment spans residues 326 to 351 (VFCLVLVFALCWLPLHLSRILKLTLY). Over 352–363 (DQNDSNRCELLS) the chain is Extracellular. Residue Asn354 is glycosylated (N-linked (GlcNAc...) asparagine). Residues 364-390 (FLLVLDYIGINMASLNSCINPIALYLV) form a helical membrane-spanning segment. The Cytoplasmic portion of the chain corresponds to 391–443 (SKRFKNCFKSCLCCWCQSFEEKQSLEEKQSCLKFKANDHGYDNFRSSNKYSSS). Residues Cys403, Cys404, and Cys406 are each lipidated (S-palmitoyl cysteine). Ser420 is modified (phosphoserine). Tyr440 is modified (phosphotyrosine). Phosphoserine occurs at positions 441, 442, and 443.

Belongs to the G-protein coupled receptor 1 family. Endothelin receptor subfamily. EDNRB sub-subfamily.

The protein localises to the cell membrane. Functionally, non-specific receptor for endothelin 1, 2, and 3. Mediates its action by association with G proteins that activate a phosphatidylinositol-calcium second messenger system. This Sus scrofa (Pig) protein is Endothelin receptor type B (EDNRB).